We begin with the raw amino-acid sequence, 63 residues long: Large ribosomal subunit protein uL29 (63 aa).

This sequence belongs to the universal ribosomal protein uL29 family.

In Colwellia psychrerythraea (strain 34H / ATCC BAA-681) (Vibrio psychroerythus), this protein is Large ribosomal subunit protein uL29.